Reading from the N-terminus, the 92-residue chain is Acylphosphatase (92 aa).

Positions 6-92 constitute an Acylphosphatase-like domain; sequence RAHVYVSGRV…EGVDGFEIRR (87 aa). Catalysis depends on residues R21 and N39.

Belongs to the acylphosphatase family.

The enzyme catalyses an acyl phosphate + H2O = a carboxylate + phosphate + H(+). This is Acylphosphatase (acyP) from Natronomonas pharaonis (strain ATCC 35678 / DSM 2160 / CIP 103997 / JCM 8858 / NBRC 14720 / NCIMB 2260 / Gabara) (Halobacterium pharaonis).